The following is a 71-amino-acid chain: uncharacterized protein (71 aa).

It belongs to the ycf40 family.

It localises to the plastid. The protein resides in the chloroplast. This is an uncharacterized protein from Pyropia yezoensis (Susabi-nori).